The sequence spans 422 residues: Serine/threonine-protein kinase H1 homolog (422 aa).

The interval 35–80 (FIKYDGGGEKTGSPSPQGQSQAVAKVSQSPPPANDQPEPADSHRKK) is disordered. Polar residues predominate over residues 46-62 (GSPSPQGQSQAVAKVSQ). The Protein kinase domain occupies 96–353 (YDIKALIGRG…AGQALKHPWI (258 aa)). ATP contacts are provided by residues 102-110 (IGRGSFSRV) and lysine 125. Aspartate 216 functions as the Proton acceptor in the catalytic mechanism. The tract at residues 376–422 (RASSRCHSTKSSQSTRSSRSTKSSKARRLREKELRELNRRYQQQCNG) is disordered. Positions 384–396 (TKSSQSTRSSRST) are enriched in low complexity. Over residues 405–414 (REKELRELNR) the composition is skewed to basic and acidic residues.

The protein belongs to the protein kinase superfamily. CAMK Ser/Thr protein kinase family.

The enzyme catalyses L-seryl-[protein] + ATP = O-phospho-L-seryl-[protein] + ADP + H(+). The catalysed reaction is L-threonyl-[protein] + ATP = O-phospho-L-threonyl-[protein] + ADP + H(+). This chain is Serine/threonine-protein kinase H1 homolog (pskh1), found in Danio rerio (Zebrafish).